We begin with the raw amino-acid sequence, 153 residues long: Endoribonuclease YbeY (153 aa).

Residues H115, H119, and H125 each coordinate Zn(2+).

This sequence belongs to the endoribonuclease YbeY family. Requires Zn(2+) as cofactor.

It localises to the cytoplasm. Functionally, single strand-specific metallo-endoribonuclease involved in late-stage 70S ribosome quality control and in maturation of the 3' terminus of the 16S rRNA. This Blochmanniella floridana protein is Endoribonuclease YbeY.